The sequence spans 433 residues: Serine--tRNA ligase (433 aa).

Residue 235-237 coordinates L-serine; the sequence is TSE. 266-268 lines the ATP pocket; that stretch reads RSE. Glu-289 is an L-serine binding site. 353-356 contributes to the ATP binding site; that stretch reads EISS. Ser-388 provides a ligand contact to L-serine.

It belongs to the class-II aminoacyl-tRNA synthetase family. Type-1 seryl-tRNA synthetase subfamily. Homodimer. The tRNA molecule binds across the dimer.

Its subcellular location is the cytoplasm. It catalyses the reaction tRNA(Ser) + L-serine + ATP = L-seryl-tRNA(Ser) + AMP + diphosphate + H(+). The enzyme catalyses tRNA(Sec) + L-serine + ATP = L-seryl-tRNA(Sec) + AMP + diphosphate + H(+). It functions in the pathway aminoacyl-tRNA biosynthesis; selenocysteinyl-tRNA(Sec) biosynthesis; L-seryl-tRNA(Sec) from L-serine and tRNA(Sec): step 1/1. Functionally, catalyzes the attachment of serine to tRNA(Ser). Is also able to aminoacylate tRNA(Sec) with serine, to form the misacylated tRNA L-seryl-tRNA(Sec), which will be further converted into selenocysteinyl-tRNA(Sec). The sequence is that of Serine--tRNA ligase from Burkholderia thailandensis (strain ATCC 700388 / DSM 13276 / CCUG 48851 / CIP 106301 / E264).